The following is a 154-amino-acid chain: Myoglobin (154 aa).

A Globin domain is found at glycine 2–lysine 148. Serine 4 bears the Phosphoserine mark. Nitrite is bound at residue histidine 65. Histidine 65 is an O2 binding site. Phosphothreonine is present on threonine 68. Histidine 94 contacts heme b.

This sequence belongs to the globin family. In terms of assembly, monomeric.

The protein localises to the cytoplasm. It localises to the sarcoplasm. The enzyme catalyses Fe(III)-heme b-[protein] + nitric oxide + H2O = Fe(II)-heme b-[protein] + nitrite + 2 H(+). It carries out the reaction H2O2 + AH2 = A + 2 H2O. Monomeric heme protein which primary function is to store oxygen and facilitate its diffusion within muscle tissues. Reversibly binds oxygen through a pentacoordinated heme iron and enables its timely and efficient release as needed during periods of heightened demand. Depending on the oxidative conditions of tissues and cells, and in addition to its ability to bind oxygen, it also has a nitrite reductase activity whereby it regulates the production of bioactive nitric oxide. Under stress conditions, like hypoxia and anoxia, it also protects cells against reactive oxygen species thanks to its pseudoperoxidase activity. The polypeptide is Myoglobin (MB) (Orcinus orca (Killer whale)).